We begin with the raw amino-acid sequence, 93 residues long: Pyrimidine/purine nucleoside phosphorylase (93 aa).

The protein belongs to the nucleoside phosphorylase PpnP family.

The catalysed reaction is a purine D-ribonucleoside + phosphate = a purine nucleobase + alpha-D-ribose 1-phosphate. It carries out the reaction adenosine + phosphate = alpha-D-ribose 1-phosphate + adenine. The enzyme catalyses cytidine + phosphate = cytosine + alpha-D-ribose 1-phosphate. It catalyses the reaction guanosine + phosphate = alpha-D-ribose 1-phosphate + guanine. The catalysed reaction is inosine + phosphate = alpha-D-ribose 1-phosphate + hypoxanthine. It carries out the reaction thymidine + phosphate = 2-deoxy-alpha-D-ribose 1-phosphate + thymine. The enzyme catalyses uridine + phosphate = alpha-D-ribose 1-phosphate + uracil. It catalyses the reaction xanthosine + phosphate = alpha-D-ribose 1-phosphate + xanthine. Functionally, catalyzes the phosphorolysis of diverse nucleosides, yielding D-ribose 1-phosphate and the respective free bases. Can use uridine, adenosine, guanosine, cytidine, thymidine, inosine and xanthosine as substrates. Also catalyzes the reverse reactions. The polypeptide is Pyrimidine/purine nucleoside phosphorylase (Cellvibrio japonicus (strain Ueda107) (Pseudomonas fluorescens subsp. cellulosa)).